Here is a 208-residue protein sequence, read N- to C-terminus: Fibroblast growth factor 6 (208 aa).

An N-terminal signal peptide occupies residues 1 to 37 (MALGQKLFITMSRGAGRLQGTLWALVFLGILVGMVVP). The N-linked (GlcNAc...) asparagine glycan is linked to Asn45. A disulfide bond links Cys90 and Cys157.

It belongs to the heparin-binding growth factors family. Interacts with FGFR1, FGFR2 and FGFR4. Affinity between fibroblast growth factors (FGFs) and their receptors is increased by heparan sulfate glycosaminoglycans that function as coreceptors. As to expression, leukemia cell lines with platelet/ megakaryocytic differentiation potential.

It is found in the secreted. The protein resides in the extracellular space. Plays an important role in the regulation of cell proliferation, cell differentiation, angiogenesis and myogenesis, and is required for normal muscle regeneration. This Homo sapiens (Human) protein is Fibroblast growth factor 6 (FGF6).